The following is a 1393-amino-acid chain: Protein strawberry notch homolog 1 (1393 aa).

Positions 129–148 (STRPSVSAPTVRNAMTSAPS) are disordered. S148 is subject to Phosphoserine. At K149 the chain carries N6-acetyllysine. Residues S162 and S214 each carry the phosphoserine modification. Residue K413 is modified to N6-acetyllysine. Residues 687 to 840 (APSNNSSPRD…ANSNTNSNSS (154 aa)) are disordered. Phosphoserine is present on residues S692, S693, and S697. Positions 697–716 (SPCKENKIKKRKGEEITREA) are enriched in basic and acidic residues. Acidic residues predominate over residues 733-747 (SGSESDASDNEESDY). Phosphoserine occurs at positions 754, 755, and 768. Acidic residues predominate over residues 756 to 775 (GDDDDFNPFLDESNEDDEND). A compositionally biased stretch (basic residues) spans 781-793 (KDHKKNKEKKKKK). Residues S794 and S815 each carry the phosphoserine modification. Residues 824–840 (PAPNSTPANSNTNSNSS) show a composition bias toward low complexity. Positions 843-870 (TSQDAVERAQQMKKDLLDKLEKLAEDLP) form a coiled coil. The residue at position 1222 (K1222) is an N6-acetyllysine. S1386 carries the post-translational modification Phosphoserine.

This sequence belongs to the SBNO family.

Its subcellular location is the nucleus. Plays a crucial role in the regulation of neural stem cells (NSCs) proliferation. Enhances the phosphorylation of GSK3B through the PI3K-Akt signaling pathway, thereby upregulating the Wnt/beta-catenin signaling pathway and promoting the proliferation of NSCs. Improves ischemic stroke recovery while inhibiting neuroinflammation through small extracellular vesicles (sEVs)-mediated mechanism. Enhances the secretion of sEVs from NSCs, which in turn inhibit both the MAPK and NF-kappaB pathways in microglia. This inhibition suppresses the pro-inflammatory M1 polarization of microglia, promoting a shift towards the M2 anti-inflammatory phenotype, which is beneficial for reducing neuroinflammation. This chain is Protein strawberry notch homolog 1 (SBNO1), found in Homo sapiens (Human).